The following is a 221-amino-acid chain: uncharacterized protein (221 aa).

The interval 1 to 30 is disordered; the sequence is MVPPNPAHQPARRTQPQLQPQSQPRAQPLP. The span at 12-25 shows a compositional bias: polar residues; sequence RRTQPQLQPQSQPR. A helical transmembrane segment spans residues 37-57; that stretch reads VLCIIVALVLLGLLVGLAILI.

Its subcellular location is the membrane. This is an uncharacterized protein from Arabidopsis thaliana (Mouse-ear cress).